The following is a 127-amino-acid chain: Major sperm protein 19/31/40/45/50/51/53/59/61/65/81/113/142 (127 aa).

Alanine 2 bears the N-acetylalanine mark. The MSP domain maps to 9 to 126; it reads DIQTQPGTKI…RRKNLPIEYN (118 aa).

As to quaternary structure, helical subfilaments are built from MSP dimers; filaments are formed from two subfilaments coiling round one another; and filaments themselves supercoil to produce bundles. As to expression, sperm.

It localises to the cell projection. The protein localises to the pseudopodium. Its subcellular location is the cytoplasm. The protein resides in the cytoskeleton. Its function is as follows. Central component in molecular interactions underlying sperm crawling. Forms an extensive filament system that extends from sperm villipoda, along the leading edge of the pseudopod. This chain is Major sperm protein 19/31/40/45/50/51/53/59/61/65/81/113/142 (msp-19), found in Caenorhabditis elegans.